Consider the following 186-residue polypeptide: Protein GrpE (186 aa).

The segment covering 1 to 22 (MSDSNKEKKKKFADMVSKRKGD) has biased composition (basic and acidic residues). The interval 1–35 (MSDSNKEKKKKFADMVSKRKGDDQEDQQTGDLSEE) is disordered. Over residues 23 to 34 (DQEDQQTGDLSE) the composition is skewed to acidic residues.

Belongs to the GrpE family. In terms of assembly, homodimer.

It localises to the cytoplasm. Participates actively in the response to hyperosmotic and heat shock by preventing the aggregation of stress-denatured proteins, in association with DnaK and GrpE. It is the nucleotide exchange factor for DnaK and may function as a thermosensor. Unfolded proteins bind initially to DnaJ; upon interaction with the DnaJ-bound protein, DnaK hydrolyzes its bound ATP, resulting in the formation of a stable complex. GrpE releases ADP from DnaK; ATP binding to DnaK triggers the release of the substrate protein, thus completing the reaction cycle. Several rounds of ATP-dependent interactions between DnaJ, DnaK and GrpE are required for fully efficient folding. In Wolbachia pipientis subsp. Culex pipiens (strain wPip), this protein is Protein GrpE.